The chain runs to 251 residues: Zinc import ATP-binding protein ZnuC (251 aa).

An ABC transporter domain is found at 5-220 (VSLENVSVSF…PEFISMFGPR (216 aa)). 37-44 (GPNGAGKS) serves as a coordination point for ATP.

The protein belongs to the ABC transporter superfamily. Zinc importer (TC 3.A.1.15.5) family. The complex is composed of two ATP-binding proteins (ZnuC), two transmembrane proteins (ZnuB) and a solute-binding protein (ZnuA).

The protein resides in the cell inner membrane. The enzyme catalyses Zn(2+)(out) + ATP(in) + H2O(in) = Zn(2+)(in) + ADP(in) + phosphate(in) + H(+)(in). Functionally, part of the ABC transporter complex ZnuABC involved in zinc import. Responsible for energy coupling to the transport system. This is Zinc import ATP-binding protein ZnuC from Shigella dysenteriae serotype 1 (strain Sd197).